The primary structure comprises 403 residues: Homoserine O-succinyltransferase (403 aa).

The AB hydrolase-1 domain maps to 58–366 (NAVLICHALS…ESNHGHDAFL (309 aa)). The active-site Nucleophile is the Ser-164. Arg-234 contacts substrate. Catalysis depends on residues Asp-329 and His-362. Asp-363 lines the substrate pocket.

The protein belongs to the AB hydrolase superfamily. MetX family. As to quaternary structure, homodimer.

The protein localises to the cytoplasm. It carries out the reaction L-homoserine + succinyl-CoA = O-succinyl-L-homoserine + CoA. It functions in the pathway amino-acid biosynthesis; L-methionine biosynthesis via de novo pathway; O-succinyl-L-homoserine from L-homoserine: step 1/1. Functionally, transfers a succinyl group from succinyl-CoA to L-homoserine, forming succinyl-L-homoserine. This chain is Homoserine O-succinyltransferase, found in Halothiobacillus neapolitanus (strain ATCC 23641 / c2) (Thiobacillus neapolitanus).